Here is a 469-residue protein sequence, read N- to C-terminus: Probable multidrug resistance protein NorM (469 aa).

The next 12 membrane-spanning stretches (helical) occupy residues 10–30 (IALS…GSEV), 34–54 (LLLA…GFVL), 74–94 (ALLW…TVLV), 121–141 (GLVM…FGIV), 179–199 (FPTM…SYAL), 214–234 (LGIA…LYLW), 264–284 (LPIG…TLLI), 292–312 (IAAH…PMGV), 335–355 (VAWA…SVLL), 369–389 (LVVA…QFPD), 409–429 (MLLA…GLGF), and 437–457 (GMWI…GWRF).

This sequence belongs to the multi antimicrobial extrusion (MATE) (TC 2.A.66.1) family.

Its subcellular location is the cell inner membrane. Functionally, multidrug efflux pump. In Xylella fastidiosa (strain Temecula1 / ATCC 700964), this protein is Probable multidrug resistance protein NorM (norM).